Consider the following 1345-residue polypeptide: Membrane-anchored lipid-binding protein LAM4 (1345 aa).

The Cytoplasmic segment spans residues 1-1197 (MTRDSKKKHH…NFSSEIFMNK (1197 aa)). Disordered stretches follow at residues 51 to 80 (RVGG…KAAA), 115 to 134 (SLKG…PSLS), 139 to 164 (EKEK…DGHD), 190 to 302 (DADN…SLDD), 356 to 397 (LPEA…KPRR), 425 to 447 (SFNS…PREM), and 489 to 531 (STII…NGRQ). Thr66 bears the Phosphothreonine mark. Low complexity predominate over residues 216 to 228 (SENSTNNKNTSST). Polar residues predominate over residues 246-271 (SKSSTPSNQQLNTTEAGSKSKPSSLS). Low complexity predominate over residues 283 to 294 (HSNSHSSSNAIS). The span at 425-436 (SFNSSNGLTNND) shows a compositional bias: polar residues. The segment covering 498–516 (SNGRPSSGLRRSSSKSFSS) has biased composition (low complexity). The region spanning 549 to 616 (EFHAIFKDSG…FKTIVQIEKR (68 aa)) is the GRAM domain. Residues 665–677 (SNSNNTNSSSNSI) are compositionally biased toward low complexity. The segment at 665–722 (SNSNNTNSSSNSISDDENDDYDDDYDDYGDDDDDLYDNSNNISDSTDMTSSVSIGKPE) is disordered. The span at 678–700 (SDDENDDYDDDYDDYGDDDDDLY) shows a compositional bias: acidic residues. Ser747 is modified (phosphoserine). VASt domains lie at 758–930 (NEKL…TRSA) and 967–1139 (DDSI…SRAK). The disordered stretch occupies residues 930–963 (ATKRKRSSKENTVTVSTLPKMEPSSHAPTEPDIQ). The span at 1141–1158 (KKPVKKVMKSHDKHRPFH) shows a compositional bias: basic residues. Residues 1141-1172 (KKPVKKVMKSHDKHRPFHSKVEQKSSESRKSD) form a disordered region. Residues 1159–1172 (SKVEQKSSESRKSD) show a composition bias toward basic and acidic residues. A helical transmembrane segment spans residues 1198-1218 (LLSPQKLFLILGLTIMLFWSP). The Lumenal portion of the chain corresponds to 1219–1345 (RLHVFQEKNN…NIERDANDLS (127 aa)).

This sequence belongs to the YSP2 family.

Its subcellular location is the endoplasmic reticulum membrane. May be involved in sterol transfer between intracellular membranes. The polypeptide is Membrane-anchored lipid-binding protein LAM4 (Saccharomyces cerevisiae (strain ATCC 204508 / S288c) (Baker's yeast)).